A 418-amino-acid polypeptide reads, in one-letter code: Serine hydroxymethyltransferase (418 aa).

(6S)-5,6,7,8-tetrahydrofolate is bound by residues Leu117 and 121–123; that span reads GHL. N6-(pyridoxal phosphate)lysine is present on Lys225.

The protein belongs to the SHMT family. Homodimer. Requires pyridoxal 5'-phosphate as cofactor.

It is found in the cytoplasm. It catalyses the reaction (6R)-5,10-methylene-5,6,7,8-tetrahydrofolate + glycine + H2O = (6S)-5,6,7,8-tetrahydrofolate + L-serine. Its pathway is one-carbon metabolism; tetrahydrofolate interconversion. The protein operates within amino-acid biosynthesis; glycine biosynthesis; glycine from L-serine: step 1/1. Its function is as follows. Catalyzes the reversible interconversion of serine and glycine with tetrahydrofolate (THF) serving as the one-carbon carrier. This reaction serves as the major source of one-carbon groups required for the biosynthesis of purines, thymidylate, methionine, and other important biomolecules. Also exhibits THF-independent aldolase activity toward beta-hydroxyamino acids, producing glycine and aldehydes, via a retro-aldol mechanism. The chain is Serine hydroxymethyltransferase from Mycoplasma mobile (strain ATCC 43663 / 163K / NCTC 11711) (Mesomycoplasma mobile).